The chain runs to 28 residues: Potassium channel toxin alpha-KTx 9.10 (28 aa).

Cystine bridges form between C3–C19, C6–C24, and C10–C26.

Belongs to the short scorpion toxin superfamily. Potassium channel inhibitor family. Alpha-KTx 09 subfamily. In terms of tissue distribution, expressed by the venom gland.

It is found in the secreted. Its function is as follows. Blocks Shaker potassium channels. In Mesobuthus eupeus (Lesser Asian scorpion), this protein is Potassium channel toxin alpha-KTx 9.10.